Consider the following 177-residue polypeptide: ATP synthase subunit delta (177 aa).

This sequence belongs to the ATPase delta chain family. As to quaternary structure, F-type ATPases have 2 components, F(1) - the catalytic core - and F(0) - the membrane proton channel. F(1) has five subunits: alpha(3), beta(3), gamma(1), delta(1), epsilon(1). F(0) has three main subunits: a(1), b(2) and c(10-14). The alpha and beta chains form an alternating ring which encloses part of the gamma chain. F(1) is attached to F(0) by a central stalk formed by the gamma and epsilon chains, while a peripheral stalk is formed by the delta and b chains.

It localises to the cell inner membrane. Its function is as follows. F(1)F(0) ATP synthase produces ATP from ADP in the presence of a proton or sodium gradient. F-type ATPases consist of two structural domains, F(1) containing the extramembraneous catalytic core and F(0) containing the membrane proton channel, linked together by a central stalk and a peripheral stalk. During catalysis, ATP synthesis in the catalytic domain of F(1) is coupled via a rotary mechanism of the central stalk subunits to proton translocation. This protein is part of the stalk that links CF(0) to CF(1). It either transmits conformational changes from CF(0) to CF(1) or is implicated in proton conduction. This chain is ATP synthase subunit delta, found in Vibrio alginolyticus.